The following is a 422-amino-acid chain: Oxysterol-binding protein 7 (422 aa).

The segment at 283–313 is disordered; it reads EAAPASSASKKEKKKEKKKAKHSKHTCSPSD. A compositionally biased stretch (basic residues) spans 293 to 307; the sequence is KEKKKEKKKAKHSKH. Residues 354-384 adopt a coiled-coil conformation; the sequence is MQAADQIKKEIEDEQRKRLQITKEEEKKERA. The tract at residues 402 to 422 is disordered; that stretch reads TLAPVSNSTSSTASDAASGSN. Residues 407–422 show a composition bias toward low complexity; that stretch reads SNSTSSTASDAASGSN.

It belongs to the OSBP family.

In Dictyostelium discoideum (Social amoeba), this protein is Oxysterol-binding protein 7 (osbG).